A 613-amino-acid chain; its full sequence is Cilia- and flagella-associated protein 100 (613 aa).

The disordered stretch occupies residues 36 to 55; sequence KSKESKKNKGNVTISDRSSN. Positions 45–55 are enriched in polar residues; the sequence is GNVTISDRSSN. 4 coiled-coil regions span residues 167-198, 233-260, 396-435, and 504-580; these read ALAM…FLEK, VEIR…KHYK, FTKL…DKEV, and GTVQ…RGRK.

It belongs to the CFAP100 family.

Its subcellular location is the cytoplasm. The protein resides in the cytoskeleton. It localises to the cilium axoneme. In terms of biological role, may play a role in ciliary/flagellar motility by regulating the assembly and the activity of axonemal inner dynein arm. The chain is Cilia- and flagella-associated protein 100 from Mus musculus (Mouse).